The primary structure comprises 463 residues: Argininosuccinate lyase (463 aa).

It belongs to the lyase 1 family. Argininosuccinate lyase subfamily.

The protein resides in the cytoplasm. The enzyme catalyses 2-(N(omega)-L-arginino)succinate = fumarate + L-arginine. It participates in amino-acid biosynthesis; L-arginine biosynthesis; L-arginine from L-ornithine and carbamoyl phosphate: step 3/3. This chain is Argininosuccinate lyase, found in Bacillus cereus (strain AH187).